The chain runs to 124 residues: Riboflavin kinase (124 aa).

10–15 is a binding site for CDP; the sequence is GLGKAA. Residues threonine 39 and asparagine 41 each contribute to the Mg(2+) site. Positions 93 and 101 each coordinate FMN. Residue 106-109 coordinates CDP; it reads DKLR.

The protein belongs to the archaeal riboflavin kinase family. Requires Mg(2+) as cofactor.

It catalyses the reaction riboflavin + CTP = CDP + FMN + H(+). It participates in cofactor biosynthesis; FMN biosynthesis; FMN from riboflavin (CTP route): step 1/1. Functionally, catalyzes the CTP-dependent phosphorylation of riboflavin (vitamin B2) to form flavin mononucleotide (FMN). The sequence is that of Riboflavin kinase from Methanobrevibacter smithii (strain ATCC 35061 / DSM 861 / OCM 144 / PS).